The following is a 959-amino-acid chain: DNA-directed RNA polymerase subunit beta'' (959 aa).

Residues Cys211, Cys288, Cys295, and Cys298 each coordinate Zn(2+).

This sequence belongs to the RNA polymerase beta' chain family. RpoC2 subfamily. In terms of assembly, in plastids the minimal PEP RNA polymerase catalytic core is composed of four subunits: alpha, beta, beta', and beta''. When a (nuclear-encoded) sigma factor is associated with the core the holoenzyme is formed, which can initiate transcription. Zn(2+) serves as cofactor.

It is found in the plastid. The protein resides in the apicoplast. The catalysed reaction is RNA(n) + a ribonucleoside 5'-triphosphate = RNA(n+1) + diphosphate. DNA-dependent RNA polymerase catalyzes the transcription of DNA into RNA using the four ribonucleoside triphosphates as substrates. The chain is DNA-directed RNA polymerase subunit beta'' from Plasmodium falciparum (isolate 3D7).